The primary structure comprises 498 residues: MDVPARVSRRAAAAAARMLLRTARVPRECWFLPTALLCAYGFFANLRPSEPFLTPYLLGPDKNLTERQVYNEIYPVWTYSYLLLLFPVFLATDYLRYKPVILLQGLSLIVTWFMLLYAQGLLAIQFLEFFYGIATATEIAYYSYIYTVVDLGMYQKVTSYCRSATLVGFTVGSVLGQILVSVVGWSLFSLNVISLTCVSVAFAVAWFLPMPQKSLFFHHIPSSCHGVNGLKVQNGGIVTDTPAANHLPGWEDIESKIPLNLDEPPVEEPEEPKPDRLRVFRVLWNDFLMCYSSRPLLCWSVWWALSTCGYFQVVNYAQGLWEKVMPSQNADIYNGGVEAVSTLLGASAVFAVGYIKLSWSTWGEMTLFLCSLLIAAAVYVMDTVQSIWVCYASYVVFRIIYMVLITIATFQIAANLSMERYALVFGVNTFIALALQTLLTLIVVDARGLGLCITTQFLIYASYFAAISVVFLANGIVSIIKKCRKQEDPSSSPQASTS.

Position 1 is an N-acetylmethionine (methionine 1). Topologically, residues 1-28 are cytoplasmic; sequence MDVPARVSRRAAAAAARMLLRTARVPRE. Residues 29-46 traverse the membrane as a helical segment; sequence CWFLPTALLCAYGFFANL. Residues 47–71 are Extracellular-facing; sequence RPSEPFLTPYLLGPDKNLTERQVYN. Asparagine 63 is a glycosylation site (N-linked (GlcNAc...) asparagine). A helical membrane pass occupies residues 72 to 92; it reads EIYPVWTYSYLLLLFPVFLAT. The Cytoplasmic portion of the chain corresponds to 93 to 105; that stretch reads DYLRYKPVILLQG. A helical transmembrane segment spans residues 106–126; sequence LSLIVTWFMLLYAQGLLAIQF. Residues 127–128 lie on the Extracellular side of the membrane; it reads LE. The helical transmembrane segment at 129 to 149 threads the bilayer; that stretch reads FFYGIATATEIAYYSYIYTVV. The Cytoplasmic segment spans residues 150-164; sequence DLGMYQKVTSYCRSA. A helical transmembrane segment spans residues 165 to 185; that stretch reads TLVGFTVGSVLGQILVSVVGW. Position 186 (serine 186) is a topological domain, extracellular. Residues 187-207 traverse the membrane as a helical segment; that stretch reads LFSLNVISLTCVSVAFAVAWF. Over 208–295 the chain is Cytoplasmic; sequence LPMPQKSLFF…DFLMCYSSRP (88 aa). Phosphoserine is present on serine 222. Residues 296–316 traverse the membrane as a helical segment; sequence LLCWSVWWALSTCGYFQVVNY. Over 317–334 the chain is Extracellular; the sequence is AQGLWEKVMPSQNADIYN. The chain crosses the membrane as a helical span at residues 335-355; it reads GGVEAVSTLLGASAVFAVGYI. Residues 356–360 lie on the Cytoplasmic side of the membrane; sequence KLSWS. A helical membrane pass occupies residues 361-381; sequence TWGEMTLFLCSLLIAAAVYVM. The Extracellular portion of the chain corresponds to 382-386; that stretch reads DTVQS. Residues 387–407 form a helical membrane-spanning segment; that stretch reads IWVCYASYVVFRIIYMVLITI. Residues 408-423 are Cytoplasmic-facing; that stretch reads ATFQIAANLSMERYAL. Residues 424–444 form a helical membrane-spanning segment; that stretch reads VFGVNTFIALALQTLLTLIVV. Residues 445-456 are Extracellular-facing; that stretch reads DARGLGLCITTQ. Residues 457–477 traverse the membrane as a helical segment; it reads FLIYASYFAAISVVFLANGIV. Residues 478-498 are Cytoplasmic-facing; the sequence is SIIKKCRKQEDPSSSPQASTS.

Belongs to the reduced folate carrier (RFC) transporter (TC 2.A.48) family. Interacts with TSPAN1; this interaction increases the stability of SLC19A2. Interacts with TMEM63B. As to expression, expressed in liver. Expressed in cochlear hair cells and duodenum (at protein level). Detected in pancreatic acinar cells (at protein level). Also expressed strongly in pancreatic islet cells. Expressed in the testis. Very highly expressed in liver, and also detected at lower levels in heart, testis, kidney, brain and spleen. In terms of tissue distribution, expressed at low levels in liver and spleen.

It is found in the cell membrane. It carries out the reaction thiamine(out) + H(+)(in) = thiamine(in) + H(+)(out). It catalyses the reaction pyridoxine(out) + n H(+)(out) = pyridoxine(in) + n H(+)(in). In terms of biological role, high-affinity transporter for the intake of thiamine. Essential for spermatogenesis. Mediates H(+)-dependent pyridoxine transport. The chain is Thiamine transporter 1 from Mus musculus (Mouse).